A 934-amino-acid polypeptide reads, in one-letter code: Replication factor C subunit 1 (934 aa).

The interval M1 to R190 is disordered. Residue S27 is modified to Phosphoserine. Basic residues predominate over residues K29–I39. Residues G89–R104 show a composition bias toward polar residues. Basic and acidic residues predominate over residues T118 to K128. A compositionally biased stretch (low complexity) spans T165–K186. A BRCT domain is found at G236 to A326. Residues T362, C374, G416 to T423, and N519 contribute to the ATP site. Over residues A876–I895 the composition is skewed to acidic residues. Residues A876–A934 form a disordered region.

It belongs to the activator 1 large subunit family. As to quaternary structure, heteropentamer of subunits rfc1, rfc2, rfc3, rfc4 and rfc5 that forms a complex (RFC) with PCNA in the presence of ATP. Interacts with cdc24.

The protein resides in the nucleus. It localises to the nucleolus. In terms of biological role, the elongation of primed DNA templates by DNA polymerase delta and epsilon requires the action of the accessory proteins PCNA and activator 1. Subunit 1 is essential for cell cycle progression. It may associate with components of the DNA replication machinery and serve to enhance the efficiency of DNA replication. In Schizosaccharomyces pombe (strain 972 / ATCC 24843) (Fission yeast), this protein is Replication factor C subunit 1 (rfc1).